The primary structure comprises 417 residues: Lissencephaly-1 homolog (417 aa).

The LisH domain maps to 7–39; sequence QKEELNRAIADYLFANGYVKALNAFREESQLAG. Residues 54 to 86 adopt a coiled-coil conformation; the sequence is TSVIRLQKKVMDLEAKLNEAEKEFQSMQNAIGF. WD repeat units lie at residues 120–159, 162–203, 204–243, 246–285, 288–340, 343–382, and 385–417; these read GHRSPITRVLFHPHYNVFVSASEDASIKVWDYETGEFEHT, GHTD…KTLT, GHDHNVSSVAFLPSGDFLVSASRDKTIKMWEVSTGYCTKT, GHTEWIRSVRPSPEGNLLASCSNDHTIRIWSVESRECQVV, GHEH…CLFV, GHDNWVRQLVFHPHGRLLLSASDDKTIRVWDLKNRRCHKT, and AHSHFVTSLDVNRLAPYAITGSVDQTIHIWDCR.

This sequence belongs to the WD repeat LIS1/nudF family.

The protein localises to the cytoplasm. It is found in the cytoskeleton. It localises to the microtubule organizing center. The protein resides in the centrosome. In terms of biological role, positively regulates the activity of the minus-end directed microtubule motor protein dynein. May enhance dynein-mediated microtubule sliding by targeting dynein to the microtubule plus end. Required for several dynein- and microtubule-dependent processes. The protein is Lissencephaly-1 homolog of Schistosoma mansoni (Blood fluke).